The chain runs to 705 residues: Methionine--tRNA ligase (705 aa).

The short motif at 17 to 27 (PYANGPVHLGH) is the 'HIGH' region element. Zn(2+) contacts are provided by Cys-149, Cys-152, Cys-162, and Cys-165. Positions 347–351 (KFSKS) match the 'KMSKS' region motif. Lys-350 lines the ATP pocket. Residues 604–705 (EFQKVDLRVA…GEGINGQSVQ (102 aa)) form the tRNA-binding domain.

This sequence belongs to the class-I aminoacyl-tRNA synthetase family. MetG type 1 subfamily. In terms of assembly, homodimer. The cofactor is Zn(2+).

The protein resides in the cytoplasm. It carries out the reaction tRNA(Met) + L-methionine + ATP = L-methionyl-tRNA(Met) + AMP + diphosphate. In terms of biological role, is required not only for elongation of protein synthesis but also for the initiation of all mRNA translation through initiator tRNA(fMet) aminoacylation. The sequence is that of Methionine--tRNA ligase from Chlorobium chlorochromatii (strain CaD3).